Here is a 106-residue protein sequence, read N- to C-terminus: Large ribosomal subunit protein uL24 (106 aa).

This sequence belongs to the universal ribosomal protein uL24 family. Part of the 50S ribosomal subunit.

Its function is as follows. One of two assembly initiator proteins, it binds directly to the 5'-end of the 23S rRNA, where it nucleates assembly of the 50S subunit. Functionally, one of the proteins that surrounds the polypeptide exit tunnel on the outside of the subunit. The chain is Large ribosomal subunit protein uL24 from Bordetella petrii (strain ATCC BAA-461 / DSM 12804 / CCUG 43448).